Reading from the N-terminus, the 53-residue chain is Conotoxin Cal9.2f (53 aa).

A propeptide spanning residues 1-6 is cleaved from the precursor; sequence KKGVTL. Intrachain disulfides connect cysteine 15–cysteine 32, cysteine 20–cysteine 42, and cysteine 22–cysteine 47.

Expressed by the venom duct.

Its subcellular location is the secreted. In terms of biological role, probable neurotoxin with unknown target. Possibly targets ion channels. This Californiconus californicus (California cone) protein is Conotoxin Cal9.2f.